A 75-amino-acid chain; its full sequence is Small ribosomal subunit protein bS21 (75 aa).

It belongs to the bacterial ribosomal protein bS21 family.

The chain is Small ribosomal subunit protein bS21 from Brucella abortus (strain S19).